We begin with the raw amino-acid sequence, 191 residues long: Peptidyl-tRNA hydrolase (191 aa).

Position 16 (Tyr16) interacts with tRNA. His21 serves as the catalytic Proton acceptor. Positions 67, 69, and 115 each coordinate tRNA.

This sequence belongs to the PTH family. In terms of assembly, monomer.

The protein resides in the cytoplasm. It catalyses the reaction an N-acyl-L-alpha-aminoacyl-tRNA + H2O = an N-acyl-L-amino acid + a tRNA + H(+). Functionally, hydrolyzes ribosome-free peptidyl-tRNAs (with 1 or more amino acids incorporated), which drop off the ribosome during protein synthesis, or as a result of ribosome stalling. Its function is as follows. Catalyzes the release of premature peptidyl moieties from peptidyl-tRNA molecules trapped in stalled 50S ribosomal subunits, and thus maintains levels of free tRNAs and 50S ribosomes. This is Peptidyl-tRNA hydrolase from Ruthia magnifica subsp. Calyptogena magnifica.